The sequence spans 63 residues: Iota-crystallin (63 aa).

It belongs to the calycin superfamily. Fatty-acid binding protein (FABP) family.

Its function is as follows. Binds vitamin A2 in the eye lens and thus functions as a UV filter. Intracellular transport of retinol. The protein is Iota-crystallin (CRBPI) of Gonatodes vittatus (Wiegmann's striped gecko).